An 87-amino-acid chain; its full sequence is Cell division topological specificity factor (87 aa).

Belongs to the MinE family.

In terms of biological role, prevents the cell division inhibition by proteins MinC and MinD at internal division sites while permitting inhibition at polar sites. This ensures cell division at the proper site by restricting the formation of a division septum at the midpoint of the long axis of the cell. The polypeptide is Cell division topological specificity factor (Clostridium botulinum (strain ATCC 19397 / Type A)).